Here is a 42-residue protein sequence, read N- to C-terminus: Protein YmiD (42 aa).

This Escherichia coli (strain K12) protein is Protein YmiD.